Here is a 206-residue protein sequence, read N- to C-terminus: Alpha-amylase/trypsin inhibitor (206 aa).

Cystine bridges form between cysteine 9–cysteine 205, cysteine 51–cysteine 61, cysteine 66–cysteine 72, cysteine 118–cysteine 194, cysteine 124–cysteine 177, cysteine 132–cysteine 142, cysteine 146–cysteine 155, and cysteine 156–cysteine 164.

Belongs to the thaumatin family.

In terms of biological role, inhibits both trypsin and alpha-amylase. Inhibits the growth of some plant fungal pathogens. In Zea mays (Maize), this protein is Alpha-amylase/trypsin inhibitor.